Consider the following 511-residue polypeptide: 2-isopropylmalate synthase (511 aa).

Residues 5-267 (IQIFDTTLRD…QTQINLEETK (263 aa)) enclose the Pyruvate carboxyltransferase domain. Residues aspartate 14, histidine 202, histidine 204, and asparagine 238 each contribute to the Mn(2+) site. The segment at 391 to 511 (KVETLQLQFV…NTKVEEGIHS (121 aa)) is regulatory domain.

Belongs to the alpha-IPM synthase/homocitrate synthase family. LeuA type 1 subfamily. Homodimer. Mn(2+) serves as cofactor.

The protein localises to the cytoplasm. The catalysed reaction is 3-methyl-2-oxobutanoate + acetyl-CoA + H2O = (2S)-2-isopropylmalate + CoA + H(+). It participates in amino-acid biosynthesis; L-leucine biosynthesis; L-leucine from 3-methyl-2-oxobutanoate: step 1/4. In terms of biological role, catalyzes the condensation of the acetyl group of acetyl-CoA with 3-methyl-2-oxobutanoate (2-ketoisovalerate) to form 3-carboxy-3-hydroxy-4-methylpentanoate (2-isopropylmalate). The polypeptide is 2-isopropylmalate synthase (Staphylococcus saprophyticus subsp. saprophyticus (strain ATCC 15305 / DSM 20229 / NCIMB 8711 / NCTC 7292 / S-41)).